Here is a 608-residue protein sequence, read N- to C-terminus: Elongation factor 4 (608 aa).

Residues Ser11 to Lys193 form the tr-type G domain. Residues Asp23–Thr28 and Asn140–Asp143 each bind GTP.

The protein belongs to the TRAFAC class translation factor GTPase superfamily. Classic translation factor GTPase family. LepA subfamily.

Its subcellular location is the cell inner membrane. The enzyme catalyses GTP + H2O = GDP + phosphate + H(+). In terms of biological role, required for accurate and efficient protein synthesis under certain stress conditions. May act as a fidelity factor of the translation reaction, by catalyzing a one-codon backward translocation of tRNAs on improperly translocated ribosomes. Back-translocation proceeds from a post-translocation (POST) complex to a pre-translocation (PRE) complex, thus giving elongation factor G a second chance to translocate the tRNAs correctly. Binds to ribosomes in a GTP-dependent manner. In Rhizobium meliloti (strain 1021) (Ensifer meliloti), this protein is Elongation factor 4.